A 297-amino-acid polypeptide reads, in one-letter code: tRNA(Ile)-lysidine synthase (297 aa).

16–21 is an ATP binding site; that stretch reads SGGSDS.

It belongs to the tRNA(Ile)-lysidine synthase family.

Its subcellular location is the cytoplasm. The catalysed reaction is cytidine(34) in tRNA(Ile2) + L-lysine + ATP = lysidine(34) in tRNA(Ile2) + AMP + diphosphate + H(+). Ligates lysine onto the cytidine present at position 34 of the AUA codon-specific tRNA(Ile) that contains the anticodon CAU, in an ATP-dependent manner. Cytidine is converted to lysidine, thus changing the amino acid specificity of the tRNA from methionine to isoleucine. This Mesomycoplasma hyopneumoniae (strain 232) (Mycoplasma hyopneumoniae) protein is tRNA(Ile)-lysidine synthase.